The chain runs to 353 residues: NADH-ubiquinone oxidoreductase chain 2 (353 aa).

8 helical membrane passes run 4-24 (SVVLILLLNIIVSVVIVLSSH), 60-80 (FLVQAFSAAMILNVALVQLWL), 96-116 (IVLTLALCLKLGLFPCHFWFP), 139-159 (FIILVSVCNIISINVLTTLGC), 198-218 (IYVGCIMFVVYIVLSSTVFLI), 241-261 (GNVLVLVILSLGGLPPLTGFL), 274-294 (NLLVPCAILIVGSLLSLFFYL), and 330-350 (VLLSILSSMSILGLLLVPALW).

The protein belongs to the complex I subunit 2 family.

Its subcellular location is the mitochondrion inner membrane. The catalysed reaction is a ubiquinone + NADH + 5 H(+)(in) = a ubiquinol + NAD(+) + 4 H(+)(out). In terms of biological role, core subunit of the mitochondrial membrane respiratory chain NADH dehydrogenase (Complex I) that is believed to belong to the minimal assembly required for catalysis. Complex I functions in the transfer of electrons from NADH to the respiratory chain. The immediate electron acceptor for the enzyme is believed to be ubiquinone. This chain is NADH-ubiquinone oxidoreductase chain 2 (ND2), found in Pisaster ochraceus (Ochre sea star).